The sequence spans 91 residues: HssA/B-like protein 24 (91 aa).

This sequence belongs to the hssA/B family.

This chain is HssA/B-like protein 24 (hssl24), found in Dictyostelium discoideum (Social amoeba).